Reading from the N-terminus, the 136-residue chain is Small ribosomal subunit protein uS8 (136 aa).

This sequence belongs to the universal ribosomal protein uS8 family. In terms of assembly, part of the 30S ribosomal subunit. Contacts proteins S5 and S12.

Its function is as follows. One of the primary rRNA binding proteins, it binds directly to 16S rRNA central domain where it helps coordinate assembly of the platform of the 30S subunit. The sequence is that of Small ribosomal subunit protein uS8 from Sulfurihydrogenibium sp. (strain YO3AOP1).